The primary structure comprises 406 residues: GTPase Obg (406 aa).

In terms of domain architecture, Obg spans 1 to 159; that stretch reads MKFVDEVSIH…RDLKLELKVL (159 aa). Residues 127–148 are disordered; sequence NTRFKSSTNRAPRQTTPGKPGE. Over residues 129-143 the composition is skewed to polar residues; the sequence is RFKSSTNRAPRQTTP. The 175-residue stretch at 160-334 folds into the OBG-type G domain; the sequence is ADVGLLGLPN…LSQDIMRYLD (175 aa). Residues 166–173, 191–195, 213–216, 283–286, and 315–317 each bind GTP; these read GLPNAGKS, FTTLV, DIPG, NKMD, and SAL. Mg(2+)-binding residues include serine 173 and threonine 193. Residues 378 to 406 are disordered; the sequence is GLKNAGAADDDDFDDEEDDGDGPEIFYVP. The span at 385-399 shows a compositional bias: acidic residues; that stretch reads ADDDDFDDEEDDGDG.

This sequence belongs to the TRAFAC class OBG-HflX-like GTPase superfamily. OBG GTPase family. Monomer. It depends on Mg(2+) as a cofactor.

The protein resides in the cytoplasm. Its function is as follows. An essential GTPase which binds GTP, GDP and possibly (p)ppGpp with moderate affinity, with high nucleotide exchange rates and a fairly low GTP hydrolysis rate. Plays a role in control of the cell cycle, stress response, ribosome biogenesis and in those bacteria that undergo differentiation, in morphogenesis control. This is GTPase Obg from Pseudomonas paraeruginosa (strain DSM 24068 / PA7) (Pseudomonas aeruginosa (strain PA7)).